The sequence spans 272 residues: Imidazole glycerol phosphate synthase subunit HisF (272 aa).

Active-site residues include Asp-11 and Asp-130.

Belongs to the HisA/HisF family. As to quaternary structure, heterodimer of HisH and HisF.

The protein localises to the cytoplasm. The enzyme catalyses 5-[(5-phospho-1-deoxy-D-ribulos-1-ylimino)methylamino]-1-(5-phospho-beta-D-ribosyl)imidazole-4-carboxamide + L-glutamine = D-erythro-1-(imidazol-4-yl)glycerol 3-phosphate + 5-amino-1-(5-phospho-beta-D-ribosyl)imidazole-4-carboxamide + L-glutamate + H(+). It participates in amino-acid biosynthesis; L-histidine biosynthesis; L-histidine from 5-phospho-alpha-D-ribose 1-diphosphate: step 5/9. In terms of biological role, IGPS catalyzes the conversion of PRFAR and glutamine to IGP, AICAR and glutamate. The HisF subunit catalyzes the cyclization activity that produces IGP and AICAR from PRFAR using the ammonia provided by the HisH subunit. This chain is Imidazole glycerol phosphate synthase subunit HisF, found in Methanococcus maripaludis (strain C7 / ATCC BAA-1331).